Here is a 347-residue protein sequence, read N- to C-terminus: Ribosomal RNA small subunit methyltransferase H (347 aa).

S-adenosyl-L-methionine contacts are provided by residues 50 to 52 (GGH), aspartate 69, phenylalanine 96, aspartate 125, and glutamine 132.

The protein belongs to the methyltransferase superfamily. RsmH family.

It is found in the cytoplasm. The catalysed reaction is cytidine(1402) in 16S rRNA + S-adenosyl-L-methionine = N(4)-methylcytidine(1402) in 16S rRNA + S-adenosyl-L-homocysteine + H(+). In terms of biological role, specifically methylates the N4 position of cytidine in position 1402 (C1402) of 16S rRNA. This Corynebacterium aurimucosum (strain ATCC 700975 / DSM 44827 / CIP 107346 / CN-1) (Corynebacterium nigricans) protein is Ribosomal RNA small subunit methyltransferase H.